Reading from the N-terminus, the 361-residue chain is Eukaryotic translation initiation factor 3 subunit F (361 aa).

The tract at residues 1-86 (MATPAVPVSA…PAPALPGPAL (86 aa)) is disordered. At alanine 2 the chain carries N-acetylalanine. 2 stretches are compositionally biased toward pro residues: residues 9–20 (SAPPATPAPVPA) and 30–40 (VPAPTPAPAAA). The span at 41 to 78 (PVPAAAPASSSDPAAAAATTAAPGQTPASAQAPAQTPA) shows a compositional bias: low complexity. Serine 50 carries the post-translational modification Phosphoserine; by CDK11; in vitro. The MPN domain occupies 96–226 (VRLHPVILAS…IKAYVSTLMG (131 aa)). Lysine 242 carries the N6-acetyllysine modification. Serine 262 is modified (phosphoserine).

It belongs to the eIF-3 subunit F family. Component of the eukaryotic translation initiation factor 3 (eIF-3) complex, which is composed of 13 subunits: EIF3A, EIF3B, EIF3C, EIF3D, EIF3E, EIF3F, EIF3G, EIF3H, EIF3I, EIF3J, EIF3K, EIF3L and EIF3M. The eIF-3 complex appears to include 3 stable modules: module A is composed of EIF3A, EIF3B, EIF3G and EIF3I; module B is composed of EIF3F, EIF3H, and EIF3M; and module C is composed of EIF3C, EIF3D, EIF3E, EIF3K and EIF3L. EIF3C of module C binds EIF3B of module A and EIF3H of module B, thereby linking the three modules. EIF3J is a labile subunit that binds to the eIF-3 complex via EIF3B. The eIF-3 complex interacts with RPS6KB1 under conditions of nutrient depletion. Mitogenic stimulation leads to binding and activation of a complex composed of MTOR and RPTOR, leading to phosphorylation and release of RPS6KB1 and binding of EIF4B to eIF-3. Interacts with RNF139; the interaction leads to protein translation inhibitions in a ubiquitination-dependent manner. Interacts with DTX1, the interaction is required for deubiquitinating activity towards NOTCH1. Post-translationally, phosphorylation is enhanced upon serum stimulation. Phosphorylated during apoptosis by caspase-processed CDK11.

Its subcellular location is the cytoplasm. The enzyme catalyses Thiol-dependent hydrolysis of ester, thioester, amide, peptide and isopeptide bonds formed by the C-terminal Gly of ubiquitin (a 76-residue protein attached to proteins as an intracellular targeting signal).. Its function is as follows. Component of the eukaryotic translation initiation factor 3 (eIF-3) complex, which is required for several steps in the initiation of protein synthesis. The eIF-3 complex associates with the 40S ribosome and facilitates the recruitment of eIF-1, eIF-1A, eIF-2:GTP:methionyl-tRNAi and eIF-5 to form the 43S pre-initiation complex (43S PIC). The eIF-3 complex stimulates mRNA recruitment to the 43S PIC and scanning of the mRNA for AUG recognition. The eIF-3 complex is also required for disassembly and recycling of post-termination ribosomal complexes and subsequently prevents premature joining of the 40S and 60S ribosomal subunits prior to initiation. The eIF-3 complex specifically targets and initiates translation of a subset of mRNAs involved in cell proliferation, including cell cycling, differentiation and apoptosis, and uses different modes of RNA stem-loop binding to exert either translational activation or repression. In terms of biological role, deubiquitinates activated NOTCH1, promoting its nuclear import, thereby acting as a positive regulator of Notch signaling. The protein is Eukaryotic translation initiation factor 3 subunit F of Pan troglodytes (Chimpanzee).